The sequence spans 231 residues: Ion-translocating oxidoreductase complex subunit E (231 aa).

6 consecutive transmembrane segments (helical) span residues 18 to 38, 39 to 59, 69 to 89, 93 to 113, 127 to 147, and 182 to 202; these read GLVQLLGLCPLLAVTATLTNA, LGLGLATMLVLIGSNILVSLV, IPVFVMIIAALVTSVQLFINA, GLYLSLGIFLPLIVTNCVIIG, STFDGLMMGLGFTLVLCVLGA, and TFLLAMLPPGAFIGMGLLIAL.

The protein belongs to the NqrDE/RnfAE family. The complex is composed of six subunits: RnfA, RnfB, RnfC, RnfD, RnfE and RnfG.

The protein resides in the cell inner membrane. Its function is as follows. Part of a membrane-bound complex that couples electron transfer with translocation of ions across the membrane. The protein is Ion-translocating oxidoreductase complex subunit E of Shewanella piezotolerans (strain WP3 / JCM 13877).